A 152-amino-acid polypeptide reads, in one-letter code: MFRGANAINLDVKGRVTIPTKYRQSLLDDCQGQLVCTIDTQQPCLLLYPLPEWEEIELKLSRLSSMNPHERRLQRLLLGYATEGEMDKSGRFLLTAPLREHAHLDKQIMLVGQLNKFEIWDHSVWQQQIQQDVATEQEAAFELTERLQDFSL.

2 SpoVT-AbrB domains span residues 5–52 and 81–124; these read ANAI…PLPE and ATEG…DHSV.

The protein belongs to the MraZ family. In terms of assembly, forms oligomers.

Its subcellular location is the cytoplasm. The protein localises to the nucleoid. In Pseudoalteromonas atlantica (strain T6c / ATCC BAA-1087), this protein is Transcriptional regulator MraZ.